The primary structure comprises 479 residues: Ribosomal RNA small subunit methyltransferase F (479 aa).

Residues 125–131 (AAAPGSK), Glu149, Gly177, and Asp194 contribute to the S-adenosyl-L-methionine site. Cys247 acts as the Nucleophile in catalysis.

Belongs to the class I-like SAM-binding methyltransferase superfamily. RsmB/NOP family.

The protein localises to the cytoplasm. The enzyme catalyses cytidine(1407) in 16S rRNA + S-adenosyl-L-methionine = 5-methylcytidine(1407) in 16S rRNA + S-adenosyl-L-homocysteine + H(+). In terms of biological role, specifically methylates the cytosine at position 1407 (m5C1407) of 16S rRNA. The polypeptide is Ribosomal RNA small subunit methyltransferase F (Shigella flexneri serotype 5b (strain 8401)).